The following is a 160-amino-acid chain: Heme transporter hrg-5 (160 aa).

A helical transmembrane segment spans residues 21 to 41 (IALTILDILIGFSNILSYAIQ). N-linked (GlcNAc...) asparagine glycosylation occurs at Asn-44. Transmembrane regions (helical) follow at residues 47–67 (ALTLTAMVTLVACHTLQMFLA), 89–109 (ITLGFLALGCFVVCFIIAGVT), and 123–142 (FTGLWATAITKYTWQNALLA). N-linked (GlcNAc...) asparagine glycosylation is present at Asn-144.

This sequence belongs to the HRG family.

Its subcellular location is the membrane. Heme transporter. The sequence is that of Heme transporter hrg-5 (hrg-5) from Caenorhabditis elegans.